We begin with the raw amino-acid sequence, 422 residues long: 26S proteasome non-ATPase regulatory subunit 11 (422 aa).

The PCI domain maps to 224–392; the sequence is DWKTAYSYFY…GVLIIFDEPP (169 aa).

Belongs to the proteasome subunit S9 family. In terms of assembly, component of the 19S proteasome regulatory particle complex. The 26S proteasome consists of a 20S core particle (CP) and two 19S regulatory subunits (RP). The regulatory particle is made of a lid composed of 9 subunits including PSMD11, a base containing 6 ATPases and few additional components.

It is found in the nucleus. Its subcellular location is the cytoplasm. The protein resides in the cytosol. Its function is as follows. Component of the 26S proteasome, a multiprotein complex involved in the ATP-dependent degradation of ubiquitinated proteins. This complex plays a key role in the maintenance of protein homeostasis by removing misfolded or damaged proteins, which could impair cellular functions, and by removing proteins whose functions are no longer required. Therefore, the proteasome participates in numerous cellular processes, including cell cycle progression, apoptosis, or DNA damage repair. In the complex, PSMD11 is required for proteasome assembly. Plays a key role in increased proteasome activity in embryonic stem cells (ESCs): its high expression in ESCs promotes enhanced assembly of the 26S proteasome, followed by higher proteasome activity. This is 26S proteasome non-ATPase regulatory subunit 11 (psmd11) from Xenopus tropicalis (Western clawed frog).